Here is a 459-residue protein sequence, read N- to C-terminus: Neuronal acetylcholine receptor subunit beta-2 (459 aa).

Residues Leu1–Lys203 lie on the Extracellular side of the membrane. 2 N-linked (GlcNAc...) asparagine glycosylation sites follow: Asn21 and Asn138. Residues Cys125 and Cys139 are joined by a disulfide bond. Residues Pro204–Leu228 form a helical membrane-spanning segment. Topologically, residues Pro229–Lys235 are cytoplasmic. The helical transmembrane segment at Val236–Ser254 threads the bilayer. Residues Lys255–Lys269 lie on the Extracellular side of the membrane. Residues Tyr270 to Val291 traverse the membrane as a helical segment. Residues His292–Arg421 lie on the Cytoplasmic side of the membrane. The helical transmembrane segment at Leu422–Val440 threads the bilayer.

Belongs to the ligand-gated ion channel (TC 1.A.9) family. Acetylcholine receptor (TC 1.A.9.1) subfamily. Beta-2/CHRNB2 sub-subfamily. In terms of assembly, neuronal AChR is a heteropentamer composed of two different types of subunits: alpha and beta. CHRNB2/Beta-2 subunit can be combined to CHRNA2/alpha-2, CHRNA3/alpha-3 or CHRNA4/alpha-4, CHRNA5/alpha-5, CHRNA6/alpha-6 and CHRNB3/beta-3 to give rise to functional receptors.

It localises to the synaptic cell membrane. The protein localises to the cell membrane. The catalysed reaction is Ca(2+)(in) = Ca(2+)(out). It carries out the reaction K(+)(in) = K(+)(out). It catalyses the reaction Na(+)(in) = Na(+)(out). With respect to regulation, activated by a myriad of ligands such as acetylcholine, cytisine, nicotine, choline and epibatidine. nAChR activity is inhibited by the antagonist alpha-conotoxins BuIA, PnIA, PnIC, GID and MII, small disulfide-constrained peptides from cone snails. Component of neuronal acetylcholine receptors (nAChRs) that function as pentameric, ligand-gated cation channels with high calcium permeability among other activities. nAChRs are excitatory neurotrasnmitter receptors formed by a collection of nAChR subunits known to mediate synaptic transmission in the nervous system and the neuromuscular junction. Each nAchR subunit confers differential attributes to channel properties, including activation, deactivation and desensitization kinetics, pH sensitivity, cation permeability, and binding to allosteric modulators. CHRNB2 forms heteropentameric neuronal acetylcholine receptors with CHRNA2, CHRNA3, CHRNA4 and CHRNA6, as well as CHRNA5 and CHRNB3 as accesory subunits. The sequence is that of Neuronal acetylcholine receptor subunit beta-2 (chrnb2) from Carassius auratus (Goldfish).